The primary structure comprises 245 residues: 2,3-bisphosphoglycerate-dependent phosphoglycerate mutase (245 aa).

Residues 8 to 15 (RHGQSLWN), 21 to 22 (TG), arginine 60, 87 to 90 (ERHY), lysine 98, 114 to 115 (RR), and 183 to 184 (GN) each bind substrate. The Tele-phosphohistidine intermediate role is filled by histidine 9. The Proton donor/acceptor role is filled by glutamate 87.

The protein belongs to the phosphoglycerate mutase family. BPG-dependent PGAM subfamily.

It catalyses the reaction (2R)-2-phosphoglycerate = (2R)-3-phosphoglycerate. Its pathway is carbohydrate degradation; glycolysis; pyruvate from D-glyceraldehyde 3-phosphate: step 3/5. Catalyzes the interconversion of 2-phosphoglycerate and 3-phosphoglycerate. The chain is 2,3-bisphosphoglycerate-dependent phosphoglycerate mutase from Bacillus cereus (strain AH187).